Reading from the N-terminus, the 343-residue chain is Transmembrane protein 120A (343 aa).

At 1–132 the chain is on the cytoplasmic side; it reads MHPPPPGPLG…KQAKFAYKDE (132 aa). Lysine 130 serves as a coordination point for CoA. A helical membrane pass occupies residues 133–152; that stretch reads YEKFKLYLTIILILISFTCR. Over 153–158 the chain is Extracellular; the sequence is FLLNSR. Residues 159-177 traverse the membrane as a helical segment; the sequence is VTDAAFNFLLVWYYCTLTI. Over 178–190 the chain is Cytoplasmic; that stretch reads RESILINNGSRIK. Positions 187 and 188 each coordinate CoA. A helical membrane pass occupies residues 191–209; it reads GWWVFHHYVSTFLSGVMLT. Residues 210-218 are Extracellular-facing; sequence WPDGLMYQK. Residues 219-240 traverse the membrane as a helical segment; the sequence is FRNQFLSFSMYQSFVQFLQYYY. Residues glutamine 237, tyrosine 240, glutamine 241, and histidine 283 each contribute to the CoA site. Residues 241–270 are Cytoplasmic-facing; the sequence is QSGCLYRLRALGERHTMDLTVEGFQSWMWR. A helical membrane pass occupies residues 271-294; sequence GLTFLLPFLFFGHFWQLFNALTLF. Residues 295–304 lie on the Extracellular side of the membrane; that stretch reads NLARDPECKE. The chain crosses the membrane as a helical span at residues 305–330; sequence WQVLMCGFPFLLLFLGNFFTTLRVVH. Topologically, residues 331–343 are cytoplasmic; that stretch reads QKFHNQLHGSKKE. Lysine 332 serves as a coordination point for CoA.

It belongs to the TMEM120 family. In terms of assembly, homodimer. Forms heterooligomer with TMEM120B. Interacts with PKD2; TMEM120A inhibits PKD2 channel activity through the physical association of PKD2 with TMEM120A.

It localises to the cell membrane. It is found in the nucleus inner membrane. The protein localises to the endoplasmic reticulum. In terms of biological role, multifunctional protein involved in mechanosensation, and plays an essential role in lipid metabolism and adipocyte differentiation. May function as an ion channel involved in sensing mechanical stimuli. Mediates the mechanosensitivity of the PKD2-TMEM120A channel complex through direct physical interaction. TMEM120A seems to affect mechanosensation by inhibiting PIEZO2 channels, possibly by altering cellular lipid content. TMEM120A is structurally similar to a lipid-modifying enzyme, ELOVL7, and contains a bound coenzyme A molecule, which suggests it might function as an enzyme in lipid metabolism. Additionnaly, implicated in innate immune response against Zika virus. Acts as a key activator of the antiviral signaling involving STING1. The sequence is that of Transmembrane protein 120A from Bos taurus (Bovine).